Consider the following 324-residue polypeptide: Serine/threonine-protein phosphatase PP1 isozyme 8 (324 aa).

Residues Asp66, His68, Asp94, and Asn126 each contribute to the Mn(2+) site. The active-site Proton donor is His127. Residues His175 and His250 each contribute to the Mn(2+) site.

The protein belongs to the PPP phosphatase family. PP-1 subfamily. It depends on Mn(2+) as a cofactor. In terms of tissue distribution, expressed in roots, rosettes and flowers.

Its subcellular location is the nucleus. The protein localises to the cytoplasm. The enzyme catalyses O-phospho-L-seryl-[protein] + H2O = L-seryl-[protein] + phosphate. It carries out the reaction O-phospho-L-threonyl-[protein] + H2O = L-threonyl-[protein] + phosphate. Its activity is regulated as follows. Phosphatase activity is strongly reduced by the protein phosphatase inhibitor 2 (I-2). Its function is as follows. Serine/threonine-protein phosphatase that possesses phosphatase activity toward para-nitrophenyl phosphate (pNPP) in vitro. This is Serine/threonine-protein phosphatase PP1 isozyme 8 from Arabidopsis thaliana (Mouse-ear cress).